Reading from the N-terminus, the 349-residue chain is Phenylalanine--tRNA ligase alpha subunit (349 aa).

Glu261 serves as a coordination point for Mg(2+).

This sequence belongs to the class-II aminoacyl-tRNA synthetase family. Phe-tRNA synthetase alpha subunit type 1 subfamily. As to quaternary structure, tetramer of two alpha and two beta subunits. It depends on Mg(2+) as a cofactor.

The protein resides in the cytoplasm. It carries out the reaction tRNA(Phe) + L-phenylalanine + ATP = L-phenylalanyl-tRNA(Phe) + AMP + diphosphate + H(+). This chain is Phenylalanine--tRNA ligase alpha subunit, found in Leuconostoc citreum (strain KM20).